A 316-amino-acid polypeptide reads, in one-letter code: 4-hydroxy-3-methylbut-2-enyl diphosphate reductase (316 aa).

Residue Cys12 participates in [4Fe-4S] cluster binding. Positions 41 and 74 each coordinate (2E)-4-hydroxy-3-methylbut-2-enyl diphosphate. His41 and His74 together coordinate dimethylallyl diphosphate. Positions 41 and 74 each coordinate isopentenyl diphosphate. Cys96 is a [4Fe-4S] cluster binding site. His124 is a (2E)-4-hydroxy-3-methylbut-2-enyl diphosphate binding site. His124 is a binding site for dimethylallyl diphosphate. His124 is a binding site for isopentenyl diphosphate. The active-site Proton donor is Glu126. Thr167 serves as a coordination point for (2E)-4-hydroxy-3-methylbut-2-enyl diphosphate. Position 197 (Cys197) interacts with [4Fe-4S] cluster. Residues Ser225, Ser226, Asn227, and Ser269 each contribute to the (2E)-4-hydroxy-3-methylbut-2-enyl diphosphate site. Dimethylallyl diphosphate contacts are provided by Ser225, Ser226, Asn227, and Ser269. Ser225, Ser226, Asn227, and Ser269 together coordinate isopentenyl diphosphate.

This sequence belongs to the IspH family. In terms of assembly, homodimer. Requires [4Fe-4S] cluster as cofactor.

The enzyme catalyses isopentenyl diphosphate + 2 oxidized [2Fe-2S]-[ferredoxin] + H2O = (2E)-4-hydroxy-3-methylbut-2-enyl diphosphate + 2 reduced [2Fe-2S]-[ferredoxin] + 2 H(+). It catalyses the reaction dimethylallyl diphosphate + 2 oxidized [2Fe-2S]-[ferredoxin] + H2O = (2E)-4-hydroxy-3-methylbut-2-enyl diphosphate + 2 reduced [2Fe-2S]-[ferredoxin] + 2 H(+). It participates in isoprenoid biosynthesis; dimethylallyl diphosphate biosynthesis; dimethylallyl diphosphate from (2E)-4-hydroxy-3-methylbutenyl diphosphate: step 1/1. Its pathway is isoprenoid biosynthesis; isopentenyl diphosphate biosynthesis via DXP pathway; isopentenyl diphosphate from 1-deoxy-D-xylulose 5-phosphate: step 6/6. Its function is as follows. Catalyzes the conversion of 1-hydroxy-2-methyl-2-(E)-butenyl 4-diphosphate (HMBPP) into a mixture of isopentenyl diphosphate (IPP) and dimethylallyl diphosphate (DMAPP). Acts in the terminal step of the DOXP/MEP pathway for isoprenoid precursor biosynthesis. The sequence is that of 4-hydroxy-3-methylbut-2-enyl diphosphate reductase from Salmonella typhi.